The primary structure comprises 156 residues: Envelope glycoprotein L (156 aa).

An N-terminal signal peptide occupies residues 1–16; sequence MSPLVAVLVFFSAALG. Positions 50-156 constitute a gL alphaherpesvirus-type domain; it reads ELEWDDEDHP…LRYNGGPPAE (107 aa). C71 and C95 form a disulfide bridge.

It belongs to the herpesviridae glycoprotein L (gL) family. Alphaherpesvirinae gL subfamily. As to quaternary structure, interacts with glycoprotein H (gH); this interaction is necessary for the correct processing and cell surface expression of gH. The heterodimer gH/gL seems to interact with gB trimers during fusion. Post-translationally, O-glycosylated, and sialylated.

The protein localises to the virion membrane. Its subcellular location is the host cell membrane. It localises to the host Golgi apparatus. The protein resides in the host trans-Golgi network. In terms of biological role, the heterodimer glycoprotein H-glycoprotein L is required for the fusion of viral and plasma membranes leading to virus entry into the host cell. Acts as a functional inhibitor of gH and maintains gH in an inhibited form. Upon binding to host integrins, gL dissociates from gH leading to activation of the viral fusion glycoproteins gB and gH. The sequence is that of Envelope glycoprotein L from Suid herpesvirus 1 (strain Indiana-Funkhauser / Becker) (SuHV-1).